The sequence spans 256 residues: Matrix protein (256 aa).

The interval Met-1–Cys-110 is interaction with M2-1. The tract at residues Cys-110–Thr-183 is nuclear targeting and binding to host importin KPNB1. The short motif at Ile-194–Val-206 is the Nuclear export signal element. Thr-205 carries the post-translational modification Phosphothreonine.

This sequence belongs to the pneumovirinae M protein family. Forms dimers. Forms higher-order oligomers. Interacts with glycoprotein G (via N-terminus). Interacts with protein M2-1; this interaction directs the matrix protein localization to cytoplasmic inclusions comprising viral proteins L, N, P, and M2-1 and mediates the matrix protein association with the nucleocapsid. Interacts with host importin KPNB1; this interaction mediates nuclear import of the matrix protein early during infection. Interacts with host AP3M1; this interaction plays an essential role in trafficking the matrix protein in host cells. Interacts with host CAV1; this interaction probably facilitates viral budding. Interacts with host CFL1; this interaction probably facilitates viral replication. Interacts with host ZNF502; this interaction probably facilitates viral release. Interacts with host RACK1. Post-translationally, phosphorylation is important for oligomerization.

It is found in the virion. The protein localises to the host cytoplasm. It localises to the host nucleus. The protein resides in the host cell membrane. Plays a crucial role in virus assembly into filaments and budding. Early in infection, localizes in the nucleus where it inhibits host cell transcription through direct binding to host chromatin. Later in infection, traffics to the cytoplasm through the action of host CRM1 to associate with inclusion bodies, the site of viral transcription and replication. During virus assembly and budding, acts as a bridge between the nucleocapsid and the lipid bilayer. Also plays a role in the inhibition of host interferon-beta response in a RACK1-dependent manner. This chain is Matrix protein (M), found in Homo sapiens (Human).